The sequence spans 702 residues: Phosphate acetyltransferase (702 aa).

The tract at residues Ala375–Gly702 is phosphate acetyltransferase.

The protein in the N-terminal section; belongs to the CobB/CobQ family. This sequence in the C-terminal section; belongs to the phosphate acetyltransferase and butyryltransferase family. In terms of assembly, homohexamer.

It is found in the cytoplasm. The enzyme catalyses acetyl-CoA + phosphate = acetyl phosphate + CoA. Its pathway is metabolic intermediate biosynthesis; acetyl-CoA biosynthesis; acetyl-CoA from acetate: step 2/2. In terms of biological role, involved in acetate metabolism. The sequence is that of Phosphate acetyltransferase (pta) from Deinococcus radiodurans (strain ATCC 13939 / DSM 20539 / JCM 16871 / CCUG 27074 / LMG 4051 / NBRC 15346 / NCIMB 9279 / VKM B-1422 / R1).